A 197-amino-acid chain; its full sequence is uncharacterized protein (197 aa).

Transmembrane regions (helical) follow at residues 30-50, 61-81, 101-121, and 130-150; these read WVAMGATAITVLAGAHIVEMA, LVAGASVVFWAFGPWLIPPLV, LWSVVFPLGMYGVGAYRLGLA, and IGEFEGWVALAVWTITFVAML.

The protein localises to the cell membrane. This is an uncharacterized protein from Mycobacterium tuberculosis (strain CDC 1551 / Oshkosh).